A 153-amino-acid polypeptide reads, in one-letter code: Large ribosomal subunit protein uL22 (153 aa).

Belongs to the universal ribosomal protein uL22 family. As to quaternary structure, part of the 50S ribosomal subunit.

Its function is as follows. This protein binds specifically to 23S rRNA. It makes multiple contacts with different domains of the 23S rRNA in the assembled 50S subunit and ribosome. Functionally, the globular domain of the protein is located near the polypeptide exit tunnel on the outside of the subunit, while an extended beta-hairpin is found that lines the wall of the exit tunnel in the center of the 70S ribosome. The polypeptide is Large ribosomal subunit protein uL22 (Methanococcus vannielii (strain ATCC 35089 / DSM 1224 / JCM 13029 / OCM 148 / SB)).